A 181-amino-acid polypeptide reads, in one-letter code: Acireductone dioxygenase (181 aa).

The Fe(2+) site is built by His98, His100, Glu104, and His142. Ni(2+)-binding residues include His98, His100, Glu104, and His142.

Belongs to the acireductone dioxygenase (ARD) family. In terms of assembly, monomer. It depends on Fe(2+) as a cofactor. Requires Ni(2+) as cofactor.

The enzyme catalyses 1,2-dihydroxy-5-(methylsulfanyl)pent-1-en-3-one + O2 = 3-(methylsulfanyl)propanoate + CO + formate + 2 H(+). It carries out the reaction 1,2-dihydroxy-5-(methylsulfanyl)pent-1-en-3-one + O2 = 4-methylsulfanyl-2-oxobutanoate + formate + 2 H(+). Its pathway is amino-acid biosynthesis; L-methionine biosynthesis via salvage pathway; L-methionine from S-methyl-5-thio-alpha-D-ribose 1-phosphate: step 5/6. Its function is as follows. Catalyzes 2 different reactions between oxygen and the acireductone 1,2-dihydroxy-3-keto-5-methylthiopentene (DHK-MTPene) depending upon the metal bound in the active site. Fe-containing acireductone dioxygenase (Fe-ARD) produces formate and 2-keto-4-methylthiobutyrate (KMTB), the alpha-ketoacid precursor of methionine in the methionine recycle pathway. Ni-containing acireductone dioxygenase (Ni-ARD) produces methylthiopropionate, carbon monoxide and formate, and does not lie on the methionine recycle pathway. In Synechococcus sp. (strain ATCC 27144 / PCC 6301 / SAUG 1402/1) (Anacystis nidulans), this protein is Acireductone dioxygenase.